A 209-amino-acid polypeptide reads, in one-letter code: MWKLNKSKVLIEDSPDEEIQAQQDAQIKDQLLQEEVQSPVSQLATKELQSLKTSFSSMKGQVTVQGASFRGWKEVTSIFNKDDEQQLLKGAKSKVISAKPKEDLKTEKKAGFWDSLAIKQNIQPKKADEIEGWEPPHITVEESPTFPDDGLDDPNSWPGWEDETKGSTKYTNLTSSGNSSRWSIKSAGKLVSIRRRSKGNLTENWKELE.

Residues 126–183 (KADEIEGWEPPHITVEESPTFPDDGLDDPNSWPGWEDETKGSTKYTNLTSSGNSSRWS) are disordered. Residues 167-183 (STKYTNLTSSGNSSRWS) show a composition bias toward polar residues.

The protein belongs to the TDRP family.

It is found in the nucleus. It localises to the cytoplasm. This chain is Testis development-related protein (tdrp), found in Xenopus laevis (African clawed frog).